A 379-amino-acid polypeptide reads, in one-letter code: Acyl-CoA dehydrogenase (379 aa).

It belongs to the acyl-CoA dehydrogenase family. FAD serves as cofactor.

The catalysed reaction is a 2,3-saturated acyl-CoA + A = a 2,3-dehydroacyl-CoA + AH2. This Bacillus subtilis (strain 168) protein is Acyl-CoA dehydrogenase (mmgC).